Here is a 49-residue protein sequence, read N- to C-terminus: Large ribosomal subunit protein bL33 (49 aa).

Belongs to the bacterial ribosomal protein bL33 family.

This chain is Large ribosomal subunit protein bL33, found in Streptococcus gordonii (strain Challis / ATCC 35105 / BCRC 15272 / CH1 / DL1 / V288).